The sequence spans 362 residues: UDP-N-acetylglucosamine--N-acetylmuramyl-(pentapeptide) pyrophosphoryl-undecaprenol N-acetylglucosamine transferase (362 aa).

UDP-N-acetyl-alpha-D-glucosamine contacts are provided by residues 15–17, N127, R165, S191, I247, 266–271, and Q292; these read TGG and ALTVSE.

The protein belongs to the glycosyltransferase 28 family. MurG subfamily.

It is found in the cell inner membrane. It carries out the reaction di-trans,octa-cis-undecaprenyl diphospho-N-acetyl-alpha-D-muramoyl-L-alanyl-D-glutamyl-meso-2,6-diaminopimeloyl-D-alanyl-D-alanine + UDP-N-acetyl-alpha-D-glucosamine = di-trans,octa-cis-undecaprenyl diphospho-[N-acetyl-alpha-D-glucosaminyl-(1-&gt;4)]-N-acetyl-alpha-D-muramoyl-L-alanyl-D-glutamyl-meso-2,6-diaminopimeloyl-D-alanyl-D-alanine + UDP + H(+). It participates in cell wall biogenesis; peptidoglycan biosynthesis. Functionally, cell wall formation. Catalyzes the transfer of a GlcNAc subunit on undecaprenyl-pyrophosphoryl-MurNAc-pentapeptide (lipid intermediate I) to form undecaprenyl-pyrophosphoryl-MurNAc-(pentapeptide)GlcNAc (lipid intermediate II). The polypeptide is UDP-N-acetylglucosamine--N-acetylmuramyl-(pentapeptide) pyrophosphoryl-undecaprenol N-acetylglucosamine transferase (Shewanella baltica (strain OS155 / ATCC BAA-1091)).